The following is a 355-amino-acid chain: Uroporphyrinogen decarboxylase (355 aa).

Residues 27 to 31 (RQAGR), D77, Y154, T209, and H328 contribute to the substrate site.

Belongs to the uroporphyrinogen decarboxylase family. In terms of assembly, homodimer.

The protein resides in the cytoplasm. The catalysed reaction is uroporphyrinogen III + 4 H(+) = coproporphyrinogen III + 4 CO2. It participates in porphyrin-containing compound metabolism; protoporphyrin-IX biosynthesis; coproporphyrinogen-III from 5-aminolevulinate: step 4/4. Catalyzes the decarboxylation of four acetate groups of uroporphyrinogen-III to yield coproporphyrinogen-III. This chain is Uroporphyrinogen decarboxylase, found in Vibrio cholerae serotype O1 (strain ATCC 39541 / Classical Ogawa 395 / O395).